Reading from the N-terminus, the 397-residue chain is S-adenosylmethionine:tRNA ribosyltransferase-isomerase (397 aa).

It belongs to the QueA family. Monomer.

The protein resides in the cytoplasm. It catalyses the reaction 7-aminomethyl-7-carbaguanosine(34) in tRNA + S-adenosyl-L-methionine = epoxyqueuosine(34) in tRNA + adenine + L-methionine + 2 H(+). It participates in tRNA modification; tRNA-queuosine biosynthesis. Transfers and isomerizes the ribose moiety from AdoMet to the 7-aminomethyl group of 7-deazaguanine (preQ1-tRNA) to give epoxyqueuosine (oQ-tRNA). The sequence is that of S-adenosylmethionine:tRNA ribosyltransferase-isomerase from Nostoc sp. (strain PCC 7120 / SAG 25.82 / UTEX 2576).